A 128-amino-acid chain; its full sequence is MAAAVEALYVVLEREGAILPRQEGFSGVYVFFSPINFVIPPMGAVMLSLRLRVCIPPGYFGRFLALTDVNQPDVFTESYIMTPDMTEELSVVLFNHGDQFFYGHAGMAVVRLMLIRVVFPVVRQASNV.

Topologically, residues 1 to 26 are cytoplasmic; sequence MAAAVEALYVVLEREGAILPRQEGFS. Residues 27–47 form a helical membrane-spanning segment; that stretch reads GVYVFFSPINFVIPPMGAVML. The Extracellular portion of the chain corresponds to 48-99; the sequence is SLRLRVCIPPGYFGRFLALTDVNQPDVFTESYIMTPDMTEELSVVLFNHGDQ. Residues 100 to 120 traverse the membrane as a helical segment; the sequence is FFYGHAGMAVVRLMLIRVVFP. Over 121–128 the chain is Cytoplasmic; it reads VVRQASNV. Residues 125–128 carry the PBZ domain binding motif motif; the sequence is ASNV.

It belongs to the adenoviridae E4-ORF1 family. In terms of assembly, may interact with host PDZ proteins through the PDZ domain binding motif (PBM), namely host DLG1, PATJ and TJP2.

The protein localises to the host membrane. Functionally, may modulate tight-junctions functions of infected cells through interactions with PDZ proteins. E4 ORF1 has ben show for Adenovirus 9 to interact with protein involved in tight junction regulation. May play a role in mTOR activation by activating PI3-kinase, thus overriding cellular checkpoint for translation. The chain is Early 4 ORF1 protein from Human adenovirus C serotype 2 (HAdV-2).